Reading from the N-terminus, the 328-residue chain is Olfactory receptor 2AJ1 (328 aa).

The Extracellular segment spans residues 1–25; sequence MGHQNHTFSSDFILLGLFSSSPTSV. The N-linked (GlcNAc...) asparagine glycan is linked to N5. A helical membrane pass occupies residues 26–49; sequence VFFLVLFVIFIMSVTENTLMILLI. Over 50 to 57 the chain is Cytoplasmic; sequence RSDSRLHT. A helical transmembrane segment spans residues 58 to 79; it reads PMYFLLSHLSLMDILHVSNIVP. At 80–100 the chain is on the extracellular side; the sequence is KMVTNFLSGSRTISFAGCGFQ. A disulfide bond links C97 and C189. The helical transmembrane segment at 101 to 120 threads the bilayer; the sequence is VFLSLTLLGGECLLLAAMSC. Residues 121 to 139 lie on the Cytoplasmic side of the membrane; it reads DRYVAICHPLRYPILMKEY. Residues 140 to 158 form a helical membrane-spanning segment; it reads ASALMAGGSWLIGVFNSTV. The Extracellular portion of the chain corresponds to 159-195; sequence HTAYALQFPFCGSRAIDHFFCEVPAMLKLSCADTTRY. A helical transmembrane segment spans residues 196-219; that stretch reads ERGVCVSAVIFLLIPFSLISASYG. Residues 220 to 236 are Cytoplasmic-facing; it reads QIILTVLQMKSSEARKK. A helical transmembrane segment spans residues 237 to 259; it reads SFSTCSFHMIVVTMYYGPFIFTY. At 260–272 the chain is on the extracellular side; it reads MRPKSYHTPGQDK. The chain crosses the membrane as a helical span at residues 273–292; the sequence is FLAIFYTILTPTLNPFIYSF. Residues 293–328 lie on the Cytoplasmic side of the membrane; the sequence is RNKDVLAVMKNMLKSNFLHKKMNRKIPECVFCLFLC.

The protein belongs to the G-protein coupled receptor 1 family.

It localises to the cell membrane. In terms of biological role, odorant receptor. The polypeptide is Olfactory receptor 2AJ1 (OR2AJ1) (Homo sapiens (Human)).